The chain runs to 82 residues: Beta-neurotoxin Css9 (82 aa).

A signal peptide spans 1 to 17 (MKLLMLIVALMIIGVQS). The LCN-type CS-alpha/beta domain occupies 18–81 (KDGYPMDHKG…VWDRATNKCR (64 aa)). Disulfide bonds link Cys-28/Cys-80, Cys-32/Cys-54, Cys-39/Cys-61, and Cys-43/Cys-63.

It belongs to the long (4 C-C) scorpion toxin superfamily. Sodium channel inhibitor family. Beta subfamily. Expressed by the venom gland.

Its subcellular location is the secreted. Its function is as follows. Beta toxins bind voltage-independently at site-4 of sodium channels (Nav) and shift the voltage of activation toward more negative potentials thereby affecting sodium channel activation and promoting spontaneous and repetitive firing. This toxin compete with high affinity with 125I-Css4 bound on rat brain synaptosome and may bind with high affinity to Nav1.1/SCN1A, Nav1.2/SCN2A and Nav1.6/SCN8A. The sequence is that of Beta-neurotoxin Css9 from Centruroides suffusus (Durango bark scorpion).